Reading from the N-terminus, the 743-residue chain is Serine-rich coiled-coil domain-containing protein 1 (743 aa).

2 disordered regions span residues 1–125 (MGDS…SRNK) and 156–175 (KSEGDDSGFTEEQTRRSVKQ). Low complexity predominate over residues 29-56 (LPSSPSSSNTVGVHSSSPSSTNSSSGST). Over residues 81–102 (EPTNQNLSISNGAQPGQSSMQK) the composition is skewed to polar residues. A coiled-coil region spans residues 672 to 713 (MKDECSMLKLQLKEKDELISQLQEELEKVQHLQKAFASRVDK).

It belongs to the CCSER family.

The chain is Serine-rich coiled-coil domain-containing protein 1 (CCSER1) from Bos taurus (Bovine).